The following is a 610-amino-acid chain: WD repeat-containing protein 46 (610 aa).

The tract at residues 1 to 103 (METAPKPGKD…TQDPFPGPAP (103 aa)) is disordered. The span at 7–19 (PGKDVPPKKDKLQ) shows a compositional bias: basic and acidic residues. A Phosphoserine modification is found at Ser41. A compositionally biased stretch (basic residues) spans 65–77 (KKSRISKKPQVPK). 6 WD repeats span residues 193–234 (LRQF…CEIN), 235–272 (VMEA…LHCI), 274–312 (RCDR…IVAA), 315–354 (ARAG…PLAK), 357–396 (CHRG…QPLS), and 399–436 (TLPH…SPPS). Positions 538–610 (ERLGYDPQAK…RPSALDRFVR (73 aa)) are disordered. Residues 572–582 (VMDEEHRDKVR) show a composition bias toward basic and acidic residues.

As to quaternary structure, part of the small subunit (SSU) processome, composed of more than 70 proteins and the RNA chaperone small nucleolar RNA (snoRNA) U3. Interacts with DDX21, NCL, NOP2 and EBNA1BP2.

It localises to the nucleus. The protein resides in the nucleolus. Scaffold component of the nucleolar structure. Required for localization of DDX21 and NCL to the granular compartment of the nucleolus. Part of the small subunit (SSU) processome, first precursor of the small eukaryotic ribosomal subunit. During the assembly of the SSU processome in the nucleolus, many ribosome biogenesis factors, an RNA chaperone and ribosomal proteins associate with the nascent pre-rRNA and work in concert to generate RNA folding, modifications, rearrangements and cleavage as well as targeted degradation of pre-ribosomal RNA by the RNA exosome. In Homo sapiens (Human), this protein is WD repeat-containing protein 46 (WDR46).